A 322-amino-acid polypeptide reads, in one-letter code: Allergen Asp f 4 (322 aa).

Positions Met1–Ala20 are cleaved as a signal peptide. Low complexity predominate over residues Ala80 to Ala105. The segment at Ala80–Asn109 is disordered.

Its subcellular location is the secreted. This is Allergen Asp f 4 from Aspergillus fumigatus (strain ATCC MYA-4609 / CBS 101355 / FGSC A1100 / Af293) (Neosartorya fumigata).